The primary structure comprises 634 residues: Chaperone protein DnaK (634 aa).

Threonine 197 carries the phosphothreonine; by autocatalysis modification. The interval 592–634 is disordered; sequence IGSSVYQQPGNQPPAPGGPNANASDDKGPDDDVIDADFTETKD. A compositionally biased stretch (acidic residues) spans 619–634; the sequence is GPDDDVIDADFTETKD.

It belongs to the heat shock protein 70 family.

Functionally, acts as a chaperone. This Prochlorococcus marinus (strain MIT 9515) protein is Chaperone protein DnaK.